Reading from the N-terminus, the 478-residue chain is Proline--tRNA ligase (478 aa).

Belongs to the class-II aminoacyl-tRNA synthetase family. ProS type 3 subfamily. Homodimer.

It localises to the cytoplasm. The catalysed reaction is tRNA(Pro) + L-proline + ATP = L-prolyl-tRNA(Pro) + AMP + diphosphate. Catalyzes the attachment of proline to tRNA(Pro) in a two-step reaction: proline is first activated by ATP to form Pro-AMP and then transferred to the acceptor end of tRNA(Pro). The polypeptide is Proline--tRNA ligase (Clostridium botulinum (strain Okra / Type B1)).